A 115-amino-acid polypeptide reads, in one-letter code: 5-hydroxyisourate hydrolase (115 aa).

A disordered region spans residues 1-23 (MSGLTTHILDQASGKPAAGVGVR). Substrate is bound by residues H7, R45, and Y112.

Belongs to the transthyretin family. 5-hydroxyisourate hydrolase subfamily. As to quaternary structure, homotetramer.

It catalyses the reaction 5-hydroxyisourate + H2O = 5-hydroxy-2-oxo-4-ureido-2,5-dihydro-1H-imidazole-5-carboxylate + H(+). In terms of biological role, catalyzes the hydrolysis of 5-hydroxyisourate (HIU) to 2-oxo-4-hydroxy-4-carboxy-5-ureidoimidazoline (OHCU). The chain is 5-hydroxyisourate hydrolase from Caulobacter vibrioides (strain ATCC 19089 / CIP 103742 / CB 15) (Caulobacter crescentus).